Consider the following 625-residue polypeptide: MSTNQETRGFQSEVKQLLQLMIHSLYSNKEIFLRELISNASDAADKLRFKALSNPALYEGDGELRVRVSFDETLGTLTISDNGIGMNREQVIDHLGTIAKSGTKEFLNSLGTDQAKDSQLIGQFGVGFYSAFIVADKVTVKTRAAGETQAVLWESAGEGDYTVADIEKATRGTDVILHLREEEKEFLSEWRLREIIGKYSDHIGLPVEIQTTEYNEEGKASGQKWEKINKAQALWTRSKNEISDEEYQEFYKHLSHDYNDSLIWAHNKVEGKQEYTSLLYVPAKAPWDLFNRDQKHGLKLYVQRVFIMDDAEVFMPNYLRFMRGLLDTNDLPLNVSREILQENKITASLRAALTKRALQLLEKLAKDDQAKYQTFWNEFGLVLKEGVGEDFANKQQIASLFRFASTQTDSSEQTVSLADYVGRMKEGQKAIYFLTADSYVAAKNSPHLELFNKKGIEVLLLSDRIDEWVVGHLTEFDGKPLQSITKSDLDLGDLADKEQEESQKAQQAEFGSFLERAQSYFGERVKKVVLTHRLTDTPAVVSTDNDEMTTQMAKLFAAMGQKAPEVKYTFELNPDHRMVKKIADLTDETKFNDWIELLFEQALLAERGSLENPAAFIKRMNKLLG.

Positions 1–337 (MSTNQETRGF…TNDLPLNVSR (337 aa)) are a; substrate-binding. The tract at residues 338-554 (EILQENKITA…NDEMTTQMAK (217 aa)) is b. Residues 555–625 (LFAAMGQKAP…FIKRMNKLLG (71 aa)) are c.

It belongs to the heat shock protein 90 family. In terms of assembly, homodimer.

It localises to the cytoplasm. Functionally, molecular chaperone. Has ATPase activity. This chain is Chaperone protein HtpG, found in Actinobacillus pleuropneumoniae serotype 5b (strain L20).